We begin with the raw amino-acid sequence, 32 residues long: Periplasmic [NiFeSe] hydrogenase small subunit (32 aa).

The [4Fe-4S] cluster site is built by C18 and C21.

The protein belongs to the [NiFe]/[NiFeSe] hydrogenase small subunit family. As to quaternary structure, heterodimer of a large and a small subunit. It depends on [3Fe-4S] cluster as a cofactor. [4Fe-4S] cluster serves as cofactor.

It is found in the periplasm. The enzyme catalyses H2 + A = AH2. The chain is Periplasmic [NiFeSe] hydrogenase small subunit from Desulfomicrobium norvegicum (strain DSM 1741 / NCIMB 8310) (Desulfovibrio baculatus (strain Norway 4)).